Consider the following 607-residue polypeptide: Arginine--tRNA ligase (607 aa).

The 'HIGH' region motif lies at 147 to 157; the sequence is PNIAKEMHVGH.

It belongs to the class-I aminoacyl-tRNA synthetase family. Monomer.

The protein resides in the cytoplasm. The enzyme catalyses tRNA(Arg) + L-arginine + ATP = L-arginyl-tRNA(Arg) + AMP + diphosphate. The protein is Arginine--tRNA ligase of Prochlorococcus marinus (strain NATL1A).